The following is a 200-amino-acid chain: Ciliary neurotrophic factor (200 aa).

This sequence belongs to the CNTF family. In terms of tissue distribution, nervous system.

The protein localises to the cytoplasm. Its function is as follows. CNTF is a survival factor for various neuronal cell types. Seems to prevent the degeneration of motor axons after axotomy. This chain is Ciliary neurotrophic factor (Cntf), found in Rattus norvegicus (Rat).